We begin with the raw amino-acid sequence, 227 residues long: N-acetyltransferase 8 (227 aa).

Over 1-42 (MAPCHIRKYQESDRQWVVGLLSRGMAEHAPATFRQLLKLPRT) the chain is Cytoplasmic. Residues 43–63 (LILLLGGPLALLLVSGSWLLA) form a helical; Signal-anchor for type II membrane protein membrane-spanning segment. An N-acetyltransferase domain is found at 61–220 (LLALVFSISL…HTVHFIYHLP (160 aa)). Residues 64-227 (LVFSISLFPA…HLPSSKVGSL (164 aa)) lie on the Lumenal side of the membrane.

Belongs to the NAT8 family. Preferentially expressed in liver and kidney. Also detected in brain (at protein level).

It is found in the endoplasmic reticulum-Golgi intermediate compartment membrane. The protein resides in the endoplasmic reticulum membrane. The enzyme catalyses L-lysyl-[protein] + acetyl-CoA = N(6)-acetyl-L-lysyl-[protein] + CoA + H(+). It carries out the reaction an S-substituted L-cysteine + acetyl-CoA = an N-acetyl-L-cysteine-S-conjugate + CoA + H(+). It participates in sulfur metabolism; glutathione metabolism. Endoplasmic reticulum (ER)-membrane-bound lysine N-acetyltransferase catalyzing the N6-acetylation of lysine residues in the lumen of the ER in various proteins, including PROM1 and BACE1, using acetyl-CoA as acetyl donor. Thereby, may regulate apoptosis through the acetylation and the regulation of the expression of PROM1. May also regulate amyloid beta-peptide secretion through acetylation of BACE1 and the regulation of its expression in neurons. N(6)-lysine acetylation in the ER maintains protein homeostasis and regulates reticulophagy. Alternatively, acetylates the free alpha-amino group of cysteine S-conjugates to form mercapturic acids. This is the final step in a major route for detoxification of a wide variety of reactive electrophiles which starts with their incorporation into glutathione S-conjugates. The glutathione S-conjugates are then further processed into cysteine S-conjugates and finally mercapturic acids which are water soluble and can be readily excreted in urine or bile. This chain is N-acetyltransferase 8, found in Homo sapiens (Human).